Reading from the N-terminus, the 269-residue chain is Polyamine aminopropyltransferase (269 aa).

Residues Met1 to Glu226 form the PABS domain. Gln28 lines the S-methyl-5'-thioadenosine pocket. Spermidine is bound by residues His59 and Asp83. Residues Asp102 and Asp133 to Gly134 contribute to the S-methyl-5'-thioadenosine site. Asp150 acts as the Proton acceptor in catalysis. Position 150-153 (Asp150–Asp153) interacts with spermidine.

Belongs to the spermidine/spermine synthase family. Homodimer or homotetramer.

Its subcellular location is the cytoplasm. The enzyme catalyses S-adenosyl 3-(methylsulfanyl)propylamine + putrescine = S-methyl-5'-thioadenosine + spermidine + H(+). It functions in the pathway amine and polyamine biosynthesis; spermidine biosynthesis; spermidine from putrescine: step 1/1. Its function is as follows. Catalyzes the irreversible transfer of a propylamine group from the amino donor S-adenosylmethioninamine (decarboxy-AdoMet) to putrescine (1,4-diaminobutane) to yield spermidine. This is Polyamine aminopropyltransferase from Archaeoglobus fulgidus (strain ATCC 49558 / DSM 4304 / JCM 9628 / NBRC 100126 / VC-16).